A 144-amino-acid chain; its full sequence is D-aminoacyl-tRNA deacylase (144 aa).

Residues 136-137 (GP) carry the Gly-cisPro motif, important for rejection of L-amino acids motif.

Belongs to the DTD family. As to quaternary structure, homodimer.

It localises to the cytoplasm. It carries out the reaction glycyl-tRNA(Ala) + H2O = tRNA(Ala) + glycine + H(+). It catalyses the reaction a D-aminoacyl-tRNA + H2O = a tRNA + a D-alpha-amino acid + H(+). An aminoacyl-tRNA editing enzyme that deacylates mischarged D-aminoacyl-tRNAs. Also deacylates mischarged glycyl-tRNA(Ala), protecting cells against glycine mischarging by AlaRS. Acts via tRNA-based rather than protein-based catalysis; rejects L-amino acids rather than detecting D-amino acids in the active site. By recycling D-aminoacyl-tRNA to D-amino acids and free tRNA molecules, this enzyme counteracts the toxicity associated with the formation of D-aminoacyl-tRNA entities in vivo and helps enforce protein L-homochirality. This is D-aminoacyl-tRNA deacylase from Haemophilus influenzae (strain ATCC 51907 / DSM 11121 / KW20 / Rd).